A 222-amino-acid polypeptide reads, in one-letter code: UPF0758 protein TM_1557 (222 aa).

An MPN domain is found at 101–222 (KLDSSVKVYK…YFSFREEGEL (122 aa)). Zn(2+) contacts are provided by H171, H173, and D184. A JAMM motif motif is present at residues 171–184 (HNHPSGDPTPSKED).

It belongs to the UPF0758 family.

The polypeptide is UPF0758 protein TM_1557 (Thermotoga maritima (strain ATCC 43589 / DSM 3109 / JCM 10099 / NBRC 100826 / MSB8)).